Reading from the N-terminus, the 639-residue chain is Carbon monoxide dehydrogenase (639 aa).

[4Fe-4S] cluster-binding residues include Cys41, Cys49, Cys50, Cys53, Cys58, and Cys72. [Ni-4Fe-4S] cluster contacts are provided by His265, Cys300, Cys338, Cys451, Cys481, and Cys531.

Belongs to the Ni-containing carbon monoxide dehydrogenase family. As to quaternary structure, homodimer. The cofactor is [4Fe-4S] cluster. Requires [Ni-4Fe-4S] cluster as cofactor.

It is found in the cytoplasm. It localises to the cell inner membrane. It carries out the reaction CO + 2 oxidized [2Fe-2S]-[ferredoxin] + H2O = 2 reduced [2Fe-2S]-[ferredoxin] + CO2 + 2 H(+). Allows growth in a CO-dependent manner in the dark. CODH oxidizes carbon monoxide coupled, via CooF, to the reduction of a hydrogen cation by a hydrogenase (possibly CooH). The chain is Carbon monoxide dehydrogenase (cooS) from Rhodospirillum rubrum.